The sequence spans 290 residues: Phosphatidylserine decarboxylase proenzyme (290 aa).

Active-site charge relay system; for autoendoproteolytic cleavage activity residues include Asp96, His153, and Ser257. Catalysis depends on Ser257, which acts as the Schiff-base intermediate with substrate; via pyruvic acid; for decarboxylase activity. Ser257 carries the post-translational modification Pyruvic acid (Ser); by autocatalysis.

The protein belongs to the phosphatidylserine decarboxylase family. PSD-B subfamily. Prokaryotic type I sub-subfamily. In terms of assembly, heterodimer of a large membrane-associated beta subunit and a small pyruvoyl-containing alpha subunit. Pyruvate serves as cofactor. Is synthesized initially as an inactive proenzyme. Formation of the active enzyme involves a self-maturation process in which the active site pyruvoyl group is generated from an internal serine residue via an autocatalytic post-translational modification. Two non-identical subunits are generated from the proenzyme in this reaction, and the pyruvate is formed at the N-terminus of the alpha chain, which is derived from the carboxyl end of the proenzyme. The autoendoproteolytic cleavage occurs by a canonical serine protease mechanism, in which the side chain hydroxyl group of the serine supplies its oxygen atom to form the C-terminus of the beta chain, while the remainder of the serine residue undergoes an oxidative deamination to produce ammonia and the pyruvoyl prosthetic group on the alpha chain. During this reaction, the Ser that is part of the protease active site of the proenzyme becomes the pyruvoyl prosthetic group, which constitutes an essential element of the active site of the mature decarboxylase.

The protein resides in the cell membrane. It catalyses the reaction a 1,2-diacyl-sn-glycero-3-phospho-L-serine + H(+) = a 1,2-diacyl-sn-glycero-3-phosphoethanolamine + CO2. It participates in phospholipid metabolism; phosphatidylethanolamine biosynthesis; phosphatidylethanolamine from CDP-diacylglycerol: step 2/2. Functionally, catalyzes the formation of phosphatidylethanolamine (PtdEtn) from phosphatidylserine (PtdSer). The sequence is that of Phosphatidylserine decarboxylase proenzyme from Haemophilus influenzae (strain 86-028NP).